Here is a 372-residue protein sequence, read N- to C-terminus: Lipoyl synthase, mitochondrial (372 aa).

The transit peptide at 1-27 directs the protein to the mitochondrion; the sequence is MSLRCGGAVRTVGPRVFGRYVFSPVRE. Residues C106, C111, C117, C137, C141, C144, and S352 each coordinate [4Fe-4S] cluster. Residues 122–341 form the Radical SAM core domain; sequence EYATATATIM…EKVGNELGFH (220 aa).

The protein belongs to the radical SAM superfamily. Lipoyl synthase family. It depends on [4Fe-4S] cluster as a cofactor.

It is found in the mitochondrion. The enzyme catalyses [[Fe-S] cluster scaffold protein carrying a second [4Fe-4S](2+) cluster] + N(6)-octanoyl-L-lysyl-[protein] + 2 oxidized [2Fe-2S]-[ferredoxin] + 2 S-adenosyl-L-methionine + 4 H(+) = [[Fe-S] cluster scaffold protein] + N(6)-[(R)-dihydrolipoyl]-L-lysyl-[protein] + 4 Fe(3+) + 2 hydrogen sulfide + 2 5'-deoxyadenosine + 2 L-methionine + 2 reduced [2Fe-2S]-[ferredoxin]. Its pathway is protein modification; protein lipoylation via endogenous pathway; protein N(6)-(lipoyl)lysine from octanoyl-[acyl-carrier-protein]: step 2/2. Functionally, catalyzes the radical-mediated insertion of two sulfur atoms into the C-6 and C-8 positions of the octanoyl moiety bound to the lipoyl domains of lipoate-dependent enzymes, thereby converting the octanoylated domains into lipoylated derivatives. The polypeptide is Lipoyl synthase, mitochondrial (Bos taurus (Bovine)).